A 405-amino-acid chain; its full sequence is Putative polysaccharide ligase RP358 (405 aa).

The next 10 membrane-spanning stretches (helical) occupy residues Ile-23–Ile-43, Leu-77–Val-97, Val-120–Ile-140, Phe-156–Ile-178, Ile-201–Ala-221, Ile-227–Ala-247, Leu-270–Phe-290, Ile-322–Tyr-342, Val-353–Tyr-375, and Ile-377–Val-397.

The protein belongs to the O-antigen ligase family.

It localises to the membrane. In Rickettsia prowazekii (strain Madrid E), this protein is Putative polysaccharide ligase RP358.